A 499-amino-acid chain; its full sequence is Probable alkaline/neutral invertase F (499 aa).

Phosphoserine is present on S11. A Phosphothreonine modification is found at T20. S497 bears the Phosphoserine mark.

This sequence belongs to the glycosyl hydrolase 100 family.

The catalysed reaction is Hydrolysis of terminal non-reducing beta-D-fructofuranoside residues in beta-D-fructofuranosides.. In terms of biological role, invertase that cleaves sucrose into glucose and fructose. This is Probable alkaline/neutral invertase F from Arabidopsis thaliana (Mouse-ear cress).